The sequence spans 329 residues: Sideroflexin (329 aa).

5 consecutive transmembrane segments (helical) span residues 95–115 (AFLP…ASIG), 147–167 (ILEA…GLGW), 183–203 (LRMM…VLIM), 238–258 (FSRA…MGLF), and 274–294 (LNLA…IALF).

It belongs to the sideroflexin family.

It localises to the mitochondrion membrane. Its function is as follows. Mitochondrial amino-acid transporter that mediates transport of serine into mitochondria. The polypeptide is Sideroflexin (Dictyostelium discoideum (Social amoeba)).